The sequence spans 123 residues: Small ribosomal subunit protein uS12 (123 aa).

The segment at Met-1–Pro-28 is disordered. The span at Arg-9–Ser-21 shows a compositional bias: basic residues. The residue at position 89 (Asp-89) is a 3-methylthioaspartic acid.

This sequence belongs to the universal ribosomal protein uS12 family. As to quaternary structure, part of the 30S ribosomal subunit. Contacts proteins S8 and S17. May interact with IF1 in the 30S initiation complex.

Its function is as follows. With S4 and S5 plays an important role in translational accuracy. Interacts with and stabilizes bases of the 16S rRNA that are involved in tRNA selection in the A site and with the mRNA backbone. Located at the interface of the 30S and 50S subunits, it traverses the body of the 30S subunit contacting proteins on the other side and probably holding the rRNA structure together. The combined cluster of proteins S8, S12 and S17 appears to hold together the shoulder and platform of the 30S subunit. This Dinoroseobacter shibae (strain DSM 16493 / NCIMB 14021 / DFL 12) protein is Small ribosomal subunit protein uS12.